The primary structure comprises 121 residues: Large ribosomal subunit protein uL22 (121 aa).

This sequence belongs to the universal ribosomal protein uL22 family. As to quaternary structure, part of the 50S ribosomal subunit.

This protein binds specifically to 23S rRNA; its binding is stimulated by other ribosomal proteins, e.g. L4, L17, and L20. It is important during the early stages of 50S assembly. It makes multiple contacts with different domains of the 23S rRNA in the assembled 50S subunit and ribosome. In terms of biological role, the globular domain of the protein is located near the polypeptide exit tunnel on the outside of the subunit, while an extended beta-hairpin is found that lines the wall of the exit tunnel in the center of the 70S ribosome. In Arthrobacter sp. (strain FB24), this protein is Large ribosomal subunit protein uL22.